Consider the following 202-residue polypeptide: NADH-quinone oxidoreductase subunit B (202 aa).

Positions 81, 82, 146, and 176 each coordinate [4Fe-4S] cluster.

The protein belongs to the complex I 20 kDa subunit family. NDH-1 is composed of 14 different subunits. Subunits NuoB, C, D, E, F, and G constitute the peripheral sector of the complex. [4Fe-4S] cluster is required as a cofactor.

The protein localises to the cell inner membrane. It catalyses the reaction a quinone + NADH + 5 H(+)(in) = a quinol + NAD(+) + 4 H(+)(out). In terms of biological role, NDH-1 shuttles electrons from NADH, via FMN and iron-sulfur (Fe-S) centers, to quinones in the respiratory chain. The immediate electron acceptor for the enzyme in this species is believed to be ubiquinone. Couples the redox reaction to proton translocation (for every two electrons transferred, four hydrogen ions are translocated across the cytoplasmic membrane), and thus conserves the redox energy in a proton gradient. This chain is NADH-quinone oxidoreductase subunit B, found in Bradyrhizobium diazoefficiens (strain JCM 10833 / BCRC 13528 / IAM 13628 / NBRC 14792 / USDA 110).